The following is a 556-amino-acid chain: Polypeptide N-acetylgalactosaminyltransferase 13 (556 aa).

The Cytoplasmic portion of the chain corresponds to 1 to 4 (MRRF). Residues 5-27 (VYCKVVLATSLMWVLVDVFLLLY) traverse the membrane as a helical; Signal-anchor for type II membrane protein segment. The Lumenal segment spans residues 28-556 (FSECNKCDDK…WLLRNMTLGT (529 aa)). N-linked (GlcNAc...) asparagine glycans are attached at residues Asn94 and Asn116. 5 disulfides stabilise this stretch: Cys105–Cys338, Cys329–Cys407, Cys441–Cys458, Cys481–Cys496, and Cys522–Cys539. The tract at residues 114–224 (LPNTSVVIVF…LGWLEPLLAR (111 aa)) is catalytic subdomain A. Substrate contacts are provided by Asp155 and Arg185. 2 residues coordinate Mn(2+): Asp208 and His210. A catalytic subdomain B region spans residues 284 to 346 (PVRTPTMAGG…TCSHVGHVFR (63 aa)). Residue Trp315 coordinates substrate. Residue His343 participates in Mn(2+) binding. The substrate site is built by Arg346 and Tyr351. The region spanning 428 to 550 (YSLGEIRNVE…GSRSQQWLLR (123 aa)) is the Ricin B-type lectin domain. N-linked (GlcNAc...) asparagine glycosylation occurs at Asn551.

It belongs to the glycosyltransferase 2 family. GalNAc-T subfamily. Requires Mn(2+) as cofactor. In terms of tissue distribution, specifically expressed in neuronal cells. Not expressed in glial cells such as astrocytes. Expressed at low level.

The protein resides in the golgi apparatus membrane. It carries out the reaction L-seryl-[protein] + UDP-N-acetyl-alpha-D-galactosamine = a 3-O-[N-acetyl-alpha-D-galactosaminyl]-L-seryl-[protein] + UDP + H(+). The catalysed reaction is L-threonyl-[protein] + UDP-N-acetyl-alpha-D-galactosamine = a 3-O-[N-acetyl-alpha-D-galactosaminyl]-L-threonyl-[protein] + UDP + H(+). Its pathway is protein modification; protein glycosylation. Functionally, catalyzes the initial reaction in O-linked oligosaccharide biosynthesis, the transfer of an N-acetyl-D-galactosamine (GalNAc) residue from UDP-GalNAc to a serine or threonine residue on the protein receptor. Generates GalNAc-O-Ser/Thr structure also known as Tn antigen, which itself is immunogenic but also serves as a precursor for the synthesis of different mucin-type O-glycan core structures. Contributes to the synthesis of O-linked glycans on mucins and proteoglycans of the central nervous system. Can glycosylate both unmodified peptides and glycopeptides that already contain an O-linked GalNAc sugar. Transfers GalNAc to Thr-/Ser-rich tandem repeats GTTPSPVPTTSTTSAP of MUC5AC. Transfers GalNAc to three consecutive serine/threonine residues on SDC3 forming a triplet-Tn epitope expressed in Purkinje cells of the developing brain. May promote neurogenesis through glycosylation and stabilization of PDPN. This Mus musculus (Mouse) protein is Polypeptide N-acetylgalactosaminyltransferase 13 (Galnt13).